The sequence spans 470 residues: PTS system trehalose-specific EIIBC component (470 aa).

A PTS EIIB type-1 domain is found at Met1–Thr88. The Phosphocysteine intermediate; for EIIB activity role is filled by Cys27. Cys27 carries the post-translational modification Phosphocysteine; by EIIA. The region spanning Lys108 to Lys470 is the PTS EIIC type-1 domain. 10 helical membrane-spanning segments follow: residues Leu110–Ile130, Ile160–Val180, Phe183–Leu203, Gly234–Thr254, Leu263–Gly283, Phe301–Ile321, His326–Trp346, Pro347–Val367, Phe403–Leu423, and Trp443–Ala463.

It localises to the cell membrane. It carries out the reaction alpha,alpha-trehalose(out) + N(pros)-phospho-L-histidyl-[protein] = alpha,alpha-trehalose 6-phosphate(in) + L-histidyl-[protein]. In terms of biological role, the phosphoenolpyruvate-dependent sugar phosphotransferase system (sugar PTS), a major carbohydrate active transport system, catalyzes the phosphorylation of incoming sugar substrates concomitantly with their translocation across the cell membrane. This system is involved in trehalose transport. In Bacillus subtilis (strain 168), this protein is PTS system trehalose-specific EIIBC component (treP).